A 458-amino-acid polypeptide reads, in one-letter code: Glutamyl-tRNA reductase (458 aa).

Residues 49–52, Ser-111, 116–118, and Gln-122 contribute to the substrate site; these read TCNR and ETE. Cys-50 (nucleophile) is an active-site residue. 191-196 serves as a coordination point for NADP(+); the sequence is GAGKMS. Composition is skewed to basic and acidic residues over residues 426–440 and 448–458; these read IPKD…KEVE and ERGHHESDFHN. The segment at 426–458 is disordered; the sequence is IPKDGEEHSSSKEVESVTQSSTERGHHESDFHN.

Belongs to the glutamyl-tRNA reductase family. Homodimer.

The catalysed reaction is (S)-4-amino-5-oxopentanoate + tRNA(Glu) + NADP(+) = L-glutamyl-tRNA(Glu) + NADPH + H(+). Its pathway is porphyrin-containing compound metabolism; protoporphyrin-IX biosynthesis; 5-aminolevulinate from L-glutamyl-tRNA(Glu): step 1/2. Its function is as follows. Catalyzes the NADPH-dependent reduction of glutamyl-tRNA(Glu) to glutamate 1-semialdehyde (GSA). The chain is Glutamyl-tRNA reductase from Natranaerobius thermophilus (strain ATCC BAA-1301 / DSM 18059 / JW/NM-WN-LF).